The primary structure comprises 185 residues: dCTP deaminase (185 aa).

DCTP is bound by residues 107-112 (KSTYAR), 131-133 (TLE), Gln-152, Tyr-166, and Gln-176. Glu-133 functions as the Proton donor/acceptor in the catalytic mechanism.

It belongs to the dCTP deaminase family. As to quaternary structure, homotrimer.

The catalysed reaction is dCTP + H2O + H(+) = dUTP + NH4(+). It participates in pyrimidine metabolism; dUMP biosynthesis; dUMP from dCTP (dUTP route): step 1/2. Functionally, catalyzes the deamination of dCTP to dUTP. This is dCTP deaminase from Anaplasma marginale (strain Florida).